Consider the following 355-residue polypeptide: MSGQGKRLMVMAGGTGGHVFPGLAVAHHLMAQGWQVRWLGTADRMEADLVPKHGIEIDFIRISGLRGKGIKALIAAPLRIFNAWRQARAIMKAYKPDVVLGMGGYVSGPGGLAAWSLGIPVVLHEQNGIAGLTNKWLAKIATKVMQAFPGAFPNAEVVGNPVRTDVLALPLPQQRLAGREGPVRVLVVGGSQGARILNQTMPQVAAKLGDSVTIWHQSGKGSQQSVEQAYAEAGQPQHKVTEFIDDMAAAYAWADVVVCRSGALTVSEIAAAGLPALFVPFQHKDRQQYWNALPLEKAGAAKIIEQSQLSVDAVANTLAGWSREILLTMAERARAASIPDATERVANEVSRAARA.

UDP-N-acetyl-alpha-D-glucosamine contacts are provided by residues 15–17 (TGG), Asn-127, Arg-163, Ser-191, Ile-244, 263–268 (ALTVSE), and Gln-288.

This sequence belongs to the glycosyltransferase 28 family. MurG subfamily.

It localises to the cell inner membrane. The enzyme catalyses di-trans,octa-cis-undecaprenyl diphospho-N-acetyl-alpha-D-muramoyl-L-alanyl-D-glutamyl-meso-2,6-diaminopimeloyl-D-alanyl-D-alanine + UDP-N-acetyl-alpha-D-glucosamine = di-trans,octa-cis-undecaprenyl diphospho-[N-acetyl-alpha-D-glucosaminyl-(1-&gt;4)]-N-acetyl-alpha-D-muramoyl-L-alanyl-D-glutamyl-meso-2,6-diaminopimeloyl-D-alanyl-D-alanine + UDP + H(+). It functions in the pathway cell wall biogenesis; peptidoglycan biosynthesis. In terms of biological role, cell wall formation. Catalyzes the transfer of a GlcNAc subunit on undecaprenyl-pyrophosphoryl-MurNAc-pentapeptide (lipid intermediate I) to form undecaprenyl-pyrophosphoryl-MurNAc-(pentapeptide)GlcNAc (lipid intermediate II). This Escherichia coli O45:K1 (strain S88 / ExPEC) protein is UDP-N-acetylglucosamine--N-acetylmuramyl-(pentapeptide) pyrophosphoryl-undecaprenol N-acetylglucosamine transferase.